Here is a 189-residue protein sequence, read N- to C-terminus: Elongation factor P (189 aa).

It belongs to the elongation factor P family.

The protein resides in the cytoplasm. The protein operates within protein biosynthesis; polypeptide chain elongation. Its function is as follows. Involved in peptide bond synthesis. Stimulates efficient translation and peptide-bond synthesis on native or reconstituted 70S ribosomes in vitro. Probably functions indirectly by altering the affinity of the ribosome for aminoacyl-tRNA, thus increasing their reactivity as acceptors for peptidyl transferase. The chain is Elongation factor P from Pseudomonas fluorescens (strain Pf0-1).